The chain runs to 65 residues: Large ribosomal subunit protein bL31 (65 aa).

Residues Cys-16, Cys-18, Cys-36, and Cys-39 each coordinate Zn(2+).

It belongs to the bacterial ribosomal protein bL31 family. Type A subfamily. Part of the 50S ribosomal subunit. The cofactor is Zn(2+).

Functionally, binds the 23S rRNA. The polypeptide is Large ribosomal subunit protein bL31 (Geotalea daltonii (strain DSM 22248 / JCM 15807 / FRC-32) (Geobacter daltonii)).